The primary structure comprises 105 residues: N(4)-acetylcytidine amidohydrolase (105 aa).

One can recognise an ASCH domain in the interval 7 to 93; that stretch reads TFFERFEHDI…VIAEIYPGLE (87 aa). The active-site Proton acceptor is Lys-21. The active-site Nucleophile is the Thr-24. The active-site Proton donor is the Glu-74.

The protein belongs to the N(4)-acetylcytidine amidohydrolase family.

The catalysed reaction is N(4)-acetylcytidine + H2O = cytidine + acetate + H(+). It carries out the reaction N(4)-acetyl-2'-deoxycytidine + H2O = 2'-deoxycytidine + acetate + H(+). It catalyses the reaction N(4)-acetylcytosine + H2O = cytosine + acetate + H(+). Its function is as follows. Catalyzes the hydrolysis of N(4)-acetylcytidine (ac4C). This is N(4)-acetylcytidine amidohydrolase from Shewanella baltica (strain OS155 / ATCC BAA-1091).